The chain runs to 152 residues: Peptide deformylase (152 aa).

The Fe cation site is built by cysteine 88 and histidine 130. The active site involves glutamate 131. Histidine 134 is a Fe cation binding site.

This sequence belongs to the polypeptide deformylase family. The cofactor is Fe(2+).

It carries out the reaction N-terminal N-formyl-L-methionyl-[peptide] + H2O = N-terminal L-methionyl-[peptide] + formate. Its function is as follows. Removes the formyl group from the N-terminal Met of newly synthesized proteins. Requires at least a dipeptide for an efficient rate of reaction. N-terminal L-methionine is a prerequisite for activity but the enzyme has broad specificity at other positions. The sequence is that of Peptide deformylase from Syntrophomonas wolfei subsp. wolfei (strain DSM 2245B / Goettingen).